We begin with the raw amino-acid sequence, 460 residues long: Chromosomal replication initiator protein DnaA (460 aa).

A domain I, interacts with DnaA modulators region spans residues 1–84 (MAVSLWQQCI…RFDIGSRPSA (84 aa)). The tract at residues 84-123 (AKKPEPAPVAAVRVPNPQTKASVGTSFNTTEPVANTNHRS) is domain II. Positions 103-123 (KASVGTSFNTTEPVANTNHRS) are disordered. Residues 124 to 340 (NINPTYQFDN…GALNRVIANA (217 aa)) are domain III, AAA+ region. Residues Gly-168, Gly-170, Lys-171, and Thr-172 each coordinate ATP. Positions 341 to 460 (NFTGRPITID…YANLIRTLSS (120 aa)) are domain IV, binds dsDNA.

The protein belongs to the DnaA family. As to quaternary structure, oligomerizes as a right-handed, spiral filament on DNA at oriC.

Its subcellular location is the cytoplasm. In terms of biological role, plays an essential role in the initiation and regulation of chromosomal replication. ATP-DnaA binds to the origin of replication (oriC) to initiate formation of the DNA replication initiation complex once per cell cycle. Binds the DnaA box (a 9 base pair repeat at the origin) and separates the double-stranded (ds)DNA. Forms a right-handed helical filament on oriC DNA; dsDNA binds to the exterior of the filament while single-stranded (ss)DNA is stabiized in the filament's interior. The ATP-DnaA-oriC complex binds and stabilizes one strand of the AT-rich DNA unwinding element (DUE), permitting loading of DNA polymerase. After initiation quickly degrades to an ADP-DnaA complex that is not apt for DNA replication. Binds acidic phospholipids. The polypeptide is Chromosomal replication initiator protein DnaA (Shewanella sp. (strain MR-4)).